The chain runs to 179 residues: Warthog protein 3 (179 aa).

An N-terminal signal peptide occupies residues 1–19 (MLYHVEMFTIILLFGFSLA). N-linked (GlcNAc...) asparagine glycans are attached at residues Asn-52 and Asn-147.

In terms of tissue distribution, expressed in the trinucleate pharyngeal gland cell g1, seam cells and hypodermis.

Its subcellular location is the secreted. Intercellular signal essential for a variety of patterning events during development. The sequence is that of Warthog protein 3 (wrt-3) from Caenorhabditis elegans.